A 228-amino-acid chain; its full sequence is Cutinase CUT1 (228 aa).

The signal sequence occupies residues 1-16 (MQFITVALTLIALASA). Cysteine 49 and cysteine 127 are disulfide-bonded. The Nucleophile role is filled by serine 138. Cysteine 189 and cysteine 196 form a disulfide bridge. N-linked (GlcNAc...) asparagine glycosylation is present at asparagine 190. Aspartate 193 is a catalytic residue. Residue histidine 206 is the Proton donor/acceptor of the active site.

It belongs to the cutinase family. The 2 disulfide bonds play a critical role in holding the catalytic residues in juxta-position; reduction of the disulfide bridges results in the complete inactivation of the enzyme.

It is found in the secreted. The enzyme catalyses cutin + H2O = cutin monomers.. Catalyzes the hydrolysis of complex carboxylic polyesters found in the cell wall of plants. Degrades cutin, a macromolecule that forms the structure of the plant cuticle. Required for efficient penetration of the host plant cuticle by the appressorium during the initial stage of fungal infection. The polypeptide is Cutinase CUT1 (Pyricularia oryzae (strain 70-15 / ATCC MYA-4617 / FGSC 8958) (Rice blast fungus)).